A 289-amino-acid chain; its full sequence is MAIVGTILFAFYSVAIAAAWFFFGQNQTILAIAIVGSVVLVGVQYKVGKWMALRSVGAEDMDEQEFPRIHRRVESLSRDMGIKKPTLKVANMGVPNAFAVGRKGNGTVVVSRELIDILEHEELDGVLAHELSHIANRDVVTMQLGQGIASIVGIVAQYIVLFSGDNDLADFFLAIVVGNLVQFLVTLFVLAISRYREYVADADARRAIGTGEPLARALEKISQGNEQAAQQQRQRTSRGRGRRQRGQRNDDGLDQQVSALCISSPDTSVLQKLVSTHPPTEKRIQRLRS.

Helical transmembrane passes span 3–23 (IVGT…WFFF) and 28–48 (TILA…YKVG). H129 is a Zn(2+) binding site. E130 is a catalytic residue. H133 is a binding site for Zn(2+). A run of 2 helical transmembrane segments spans residues 144–164 (LGQG…LFSG) and 172–192 (FLAI…VLAI). E197 is a Zn(2+) binding site. The segment at 222 to 250 (SQGNEQAAQQQRQRTSRGRGRRQRGQRND) is disordered. Positions 235–246 (RTSRGRGRRQRG) are enriched in basic residues.

This sequence belongs to the peptidase M48B family. It depends on Zn(2+) as a cofactor.

It localises to the cell membrane. The polypeptide is Protease HtpX homolog (Halobacterium salinarum (strain ATCC 700922 / JCM 11081 / NRC-1) (Halobacterium halobium)).